Consider the following 830-residue polypeptide: C-Jun-amino-terminal kinase-interacting protein 2 (830 aa).

Disordered regions lie at residues 1–26 (MADR…PPQD), 44–354 (CGLG…ADSP), 367–438 (EGSS…PGPC), 452–504 (LWAT…GSTA), and 539–574 (GNDS…PDSP). Acidic residues predominate over residues 77 to 105 (DFQEFEMIDDNEEEDDEEEEEEEEEEEDG). Residues 111 to 278 (AGGGPGSQAL…RMISSISETE (168 aa)) are JNK-binding domain (JBD). Positions 142-172 (LHLTTLGAQDSLNNNNGGFTSAPPSSWQETV) are enriched in polar residues. Low complexity-rich tracts occupy residues 176–190 (PAQE…PLLP) and 218–227 (ASSGGASPSS). Residues 233–249 (ADLRSHSSGGHEGRRSS) show a composition bias toward basic and acidic residues. The interval 242–504 (GHEGRRSSQE…PGSRTTGSTA (263 aa)) is necessary for interaction with FGF13. Phosphoserine occurs at positions 257, 304, and 307. Positions 271–307 (ISSISETELELSSDGGSSSGRSSHLTNSIEEASSPAS) are enriched in low complexity. Over residues 333–352 (TNSEYESGSESEPDLSEDAD) the composition is skewed to acidic residues. The span at 427–437 (APRLGPAQPGP) shows a compositional bias: low complexity. Acidic residues-rich tracts occupy residues 471–490 (SEEE…DAED) and 541–555 (DSEE…EEEA). The SH3 domain occupies 610 to 671 (EREQTHRAVF…PAFYAHAVPG (62 aa)). Positions 683 to 819 (PCWVDRFDVQ…FLEYYQEHLA (137 aa)) constitute a PID domain.

The protein belongs to the JIP scaffold family. In terms of assembly, forms homo- or heterooligomeric complexes. Binds specific components of the JNK signaling pathway namely JNK1, JNK2, JNK3, MAP2K7, MAP3K10, MAP3K11, MAP3K12 and MAPK13. Also binds the proline-rich domain-containing splice variant of apolipoprotein E receptor 2 (ApoER2). Binds the TPR motif-containing C-terminal of kinesin light chain. Binds the cytoplasmic tails of LRP1 and LRP2 (Megalin). Interacts with DCLK2. Interacts with FGF13; enables the interaction with MAPK13 and may regulate the MAPK8IP2 scaffolding activity. Interacts with TIAM1 and TIAM2. Interacts with SH3RF2. Highly expressed in brain. Expressed in all neurons. Also expressed in testis, primarily in the epididymal epidermis.

It is found in the cytoplasm. The JNK-interacting protein (JIP) group of scaffold proteins selectively mediates JNK signaling by aggregating specific components of the MAPK cascade to form a functional JNK signaling module. JIP2 inhibits IL1 beta-induced apoptosis in insulin-secreting cells. The chain is C-Jun-amino-terminal kinase-interacting protein 2 (Mapk8ip2) from Mus musculus (Mouse).